Consider the following 436-residue polypeptide: Protein MSS51, mitochondrial (436 aa).

A mitochondrion-targeting transit peptide spans 1–26 (MTVLYAPSGATQLYFHLLRKSPHNRL). Positions 43 to 66 (ALGLDPPPSPEDPTPENRFHPWDQ) are disordered.

It belongs to the MSS51 family. In terms of assembly, interacts with COX1 and COX14.

Its subcellular location is the mitochondrion inner membrane. Its function is as follows. Has a dual role in the assembly of cytochrome oxidase subunit 1 (COX1). It has a regulative function on COX1 synthesis, acting as a translational activator specific for the COX1 mRNA, and it also binds to newly synthesized COX1 protein. Together with COX14, may act as a chaperone that binds efficiently unassembled COX1 and prevents it from unproductive aggregation. When bound to COX1, MSS51 is unable to interact with the COX1 mRNA and translation is halted. This may be a feedback control that ensures that COX1 is only produced as long as potentially harmful assembly intermediates are not accumulating. This Saccharomyces cerevisiae (strain ATCC 204508 / S288c) (Baker's yeast) protein is Protein MSS51, mitochondrial (MSS51).